The following is a 232-amino-acid chain: Ribonuclease 3 (232 aa).

Residues 5 to 134 enclose the RNase III domain; the sequence is QTVLKNHFAI…FLGALLLDKD (130 aa). Glu47 contributes to the Mg(2+) binding site. Asp51 is a catalytic residue. Asp120 and Glu123 together coordinate Mg(2+). Residue Glu123 is part of the active site. Residues 160 to 229 enclose the DRBM domain; sequence DYKTHLQELL…AKNAVEKGLD (70 aa).

Belongs to the ribonuclease III family. As to quaternary structure, homodimer. Mg(2+) serves as cofactor.

The protein resides in the cytoplasm. It catalyses the reaction Endonucleolytic cleavage to 5'-phosphomonoester.. In terms of biological role, digests double-stranded RNA. Involved in the processing of primary rRNA transcript to yield the immediate precursors to the large and small rRNAs (23S and 16S). Processes some mRNAs, and tRNAs when they are encoded in the rRNA operon. Processes pre-crRNA and tracrRNA of type II CRISPR loci if present in the organism. The chain is Ribonuclease 3 from Streptococcus pneumoniae (strain P1031).